The following is a 125-amino-acid chain: Large ribosomal subunit protein bL19 (125 aa).

The protein belongs to the bacterial ribosomal protein bL19 family.

Functionally, this protein is located at the 30S-50S ribosomal subunit interface and may play a role in the structure and function of the aminoacyl-tRNA binding site. This Ehrlichia ruminantium (strain Welgevonden) protein is Large ribosomal subunit protein bL19.